We begin with the raw amino-acid sequence, 267 residues long: 2-keto-3-deoxy-L-rhamnonate aldolase (267 aa).

The active-site Proton acceptor is His-49. Position 151 (Gln-151) interacts with substrate. Glu-153 lines the Mg(2+) pocket. Substrate contacts are provided by Ala-178 and Asp-179. Asp-179 serves as a coordination point for Mg(2+).

Belongs to the HpcH/HpaI aldolase family. KDR aldolase subfamily. As to quaternary structure, homohexamer. The cofactor is Mg(2+).

It carries out the reaction 2-dehydro-3-deoxy-L-rhamnonate = (S)-lactaldehyde + pyruvate. In terms of biological role, catalyzes the reversible retro-aldol cleavage of 2-keto-3-deoxy-L-rhamnonate (KDR) to pyruvate and lactaldehyde. This chain is 2-keto-3-deoxy-L-rhamnonate aldolase, found in Escherichia coli O6:K15:H31 (strain 536 / UPEC).